Reading from the N-terminus, the 571-residue chain is Putative phospholipase B-like 1 (571 aa).

The N-terminal stretch at 1–18 (MNWIFIFLAAAVAIGCEA) is a signal peptide. N-linked (GlcNAc...) asparagine glycosylation is found at Asn-62, Asn-149, Asn-442, and Asn-473.

Belongs to the phospholipase B-like family.

Its subcellular location is the lysosome. Its function is as follows. Putative phospholipase. This is Putative phospholipase B-like 1 from Caenorhabditis elegans.